A 256-amino-acid chain; its full sequence is uncharacterized protein (256 aa).

This is an uncharacterized protein from Escherichia coli (strain K12).